The following is a 288-amino-acid chain: Small ribosomal subunit protein uS2 (288 aa).

Residues 255–288 (ANNRDHKNNKNNSTIDNAENLKEENLVGGSNNES) form a disordered region.

Belongs to the universal ribosomal protein uS2 family.

This chain is Small ribosomal subunit protein uS2, found in Ehrlichia chaffeensis (strain ATCC CRL-10679 / Arkansas).